The sequence spans 353 residues: Nicotinate-nucleotide--dimethylbenzimidazole phosphoribosyltransferase (353 aa).

Glu319 serves as the catalytic Proton acceptor.

The protein belongs to the CobT family.

It carries out the reaction 5,6-dimethylbenzimidazole + nicotinate beta-D-ribonucleotide = alpha-ribazole 5'-phosphate + nicotinate + H(+). Its pathway is nucleoside biosynthesis; alpha-ribazole biosynthesis; alpha-ribazole from 5,6-dimethylbenzimidazole: step 1/2. Catalyzes the synthesis of alpha-ribazole-5'-phosphate from nicotinate mononucleotide (NAMN) and 5,6-dimethylbenzimidazole (DMB). This Chlorobaculum parvum (strain DSM 263 / NCIMB 8327) (Chlorobium vibrioforme subsp. thiosulfatophilum) protein is Nicotinate-nucleotide--dimethylbenzimidazole phosphoribosyltransferase.